We begin with the raw amino-acid sequence, 292 residues long: Large ribosomal subunit protein uL18 (292 aa).

Belongs to the universal ribosomal protein uL18 family. In terms of assembly, component of the large ribosomal subunit (LSU).

Its subcellular location is the cytoplasm. It is found in the nucleus. Functionally, component of the ribosome, a large ribonucleoprotein complex responsible for the synthesis of proteins in the cell. The small ribosomal subunit (SSU) binds messenger RNAs (mRNAs) and translates the encoded message by selecting cognate aminoacyl-transfer RNA (tRNA) molecules. The large subunit (LSU) contains the ribosomal catalytic site termed the peptidyl transferase center (PTC), which catalyzes the formation of peptide bonds, thereby polymerizing the amino acids delivered by tRNAs into a polypeptide chain. The nascent polypeptides leave the ribosome through a tunnel in the LSU and interact with protein factors that function in enzymatic processing, targeting, and the membrane insertion of nascent chains at the exit of the ribosomal tunnel. This chain is Large ribosomal subunit protein uL18 (rpl5), found in Dictyostelium discoideum (Social amoeba).